A 142-amino-acid polypeptide reads, in one-letter code: Large ribosomal subunit protein uL11 (142 aa).

The protein belongs to the universal ribosomal protein uL11 family. Part of the ribosomal stalk of the 50S ribosomal subunit. Interacts with L10 and the large rRNA to form the base of the stalk. L10 forms an elongated spine to which L12 dimers bind in a sequential fashion forming a multimeric L10(L12)X complex. One or more lysine residues are methylated.

Its function is as follows. Forms part of the ribosomal stalk which helps the ribosome interact with GTP-bound translation factors. This chain is Large ribosomal subunit protein uL11, found in Shigella boydii serotype 4 (strain Sb227).